Here is a 486-residue protein sequence, read N- to C-terminus: Transcription enhancer factor-like protein egl-44 (486 aa).

The span at 47 to 57 (GTTTPTTTSGG) shows a compositional bias: low complexity. Residues 47–87 (GTTTPTTTSGGQMMTLSPPAGDGPGSAGSMAPESTSSLSDL) form a disordered region. A DNA-binding region (TEA) is located at residues 88–164 (SGDAEGVWSI…QVLARKKLRD (77 aa)). Positions 165 to 188 (EQAKKKGDIPSLLQQASPPGGVKS) are disordered.

As to quaternary structure, interacts (via N-terminus) with egl-46 (via C-terminus); the interaction is direct; the interaction may regulate transcription. Interacts with yap-1 (via WW domain); the interaction may regulate transcription. Expressed in HSN neurons in embryos and in the FLP neurons from the L1 stage through to adults. Not expressed in touch cells. Also expressed in larval hypodermis, intestine, pharyngeal muscle and other neurons. In adults expression is lost from some neurons, is weaker in the hypodermis but remains in the intestine. Expressed in HOB neuron, ray neurons RnA and RnB, and the ray structural cell, Rnst; rays are male-specific genital sensilla (simple sense organs).

It localises to the nucleus. Functionally, transcription factor. Binds to DNA sequence motif 5'-CATNNNNAAATGCAT-3' as a heterodimer with egl-46. Represses expression of genes involved in differentiation of touch receptor neurons (TRN), probably acting as a heterodimer with egl-46, perhaps by occupying similar cis-regulatory elements as an unc-86/mec-3 heterodimer. Plays a role in cell fate specification of neurons, including the hook neuron HOB, and touch receptor neurons. Involved in male mating behavior, acting in concert with egl-46, via modulation of expression of polycystins lov-1 and pkd-2, homeodomain protein ceh-26, and neuropeptide-like protein nlp-8. Acts upstream of egl-46 to prevent touch cell differentiation in FLP neurons. Plays a role in neuron differentiation by repressing the expression of zag-1 in FLP neurons, probably acting as a heterodimer with egl-46; because zag-1 represses expression of egl-46 and egl-44, together these proteins form a bistable, negative-feedback loop that regulates the choice between neuronal fates. Also promotes HSN neuron development. In association with egl-46, regulates cell cycle exit in the neuronal Q cell lineage. Plays a role in specifying commissural dendrites of the PVD nociceptive neurons, acting in concert with egl-46. May be involved in thermal stress response downstream of yap-1. The sequence is that of Transcription enhancer factor-like protein egl-44 (egl-44) from Caenorhabditis elegans.